The following is a 204-amino-acid chain: FMN-dependent NADH:quinone oxidoreductase 1 (204 aa).

FMN is bound by residues S10 and 15–17; that span reads SLS.

This sequence belongs to the azoreductase type 1 family. In terms of assembly, homodimer. Requires FMN as cofactor.

The enzyme catalyses 2 a quinone + NADH + H(+) = 2 a 1,4-benzosemiquinone + NAD(+). It carries out the reaction N,N-dimethyl-1,4-phenylenediamine + anthranilate + 2 NAD(+) = 2-(4-dimethylaminophenyl)diazenylbenzoate + 2 NADH + 2 H(+). Its function is as follows. Quinone reductase that provides resistance to thiol-specific stress caused by electrophilic quinones. Also exhibits azoreductase activity. Catalyzes the reductive cleavage of the azo bond in aromatic azo compounds to the corresponding amines. The chain is FMN-dependent NADH:quinone oxidoreductase 1 from Rhizobium etli (strain ATCC 51251 / DSM 11541 / JCM 21823 / NBRC 15573 / CFN 42).